Reading from the N-terminus, the 482-residue chain is BTB/POZ domain and ankyrin repeat-containing protein NOOT1 (482 aa).

The region spanning 25-107 (SDVVFSVEGR…LYSGQVSIVP (83 aa)) is the BTB domain. Residues 113–127 (RPNCGDRGCWHTHCT) form a C2HC NPR-type zinc finger. C116, C121, H123, and C126 together coordinate Zn(2+). 4 ANK repeats span residues 249 to 278 (QKIR…LNLD), 279 to 308 (EALA…DVNF), 313 to 342 (TGKT…DPNV), and 346 to 380 (DGVT…KLRL). Positions 395 to 434 (EEGNNNNSNNNNNATASSATNMYPHHNMNEDHHHSHNNNN) are disordered. A compositionally biased stretch (low complexity) spans 398–415 (NNNNSNNNNNATASSATN).

Belongs to the plant 'ANKYRIN-BTB/POZ' family. 'NOOT-BOP-COCH-like' (NBCL) subfamily. In terms of assembly, homodimer. Expressed in the shoot apical meristem (SAM) at the base of the developing leaf where stipules are formed. Associated with functional and vestigial abscission zones (AZs), including pulvini.

The protein resides in the nucleus. Its subcellular location is the cytoplasm. The protein localises to the cell membrane. Its pathway is protein modification; protein ubiquitination. Its function is as follows. May act as a substrate-specific adapter of an E3 ubiquitin-protein ligase complex (CUL3-RBX1-BTB) which mediates the ubiquitination and subsequent proteasomal degradation of target proteins. Transcriptional co-regulator involved in the promotion of leaf and floral meristem fate and determinacy. Promotes normal stipule growth and development. Required for the abscission of senescent organs, probably by regulating the cell wall disorganization in abscission zones (AZs, e.g. pulvini at the base of leaves). Involved in the coordination of the symbiotic nodule developmental program. Promotes the formation of root nodules by interacting directly with APP1 to modulate the expression of the nuclear transcription factor Y subunit (NF-YA1), a key nodulin. Necessary for the robust maintenance of nodule identity throughout the nodule developmental program. Involved in the regulation of indeterminate nodule identity in association with NOOT2. The protein is BTB/POZ domain and ankyrin repeat-containing protein NOOT1 of Medicago truncatula (Barrel medic).